Here is a 324-residue protein sequence, read N- to C-terminus: tRNA-cytidine(32) 2-sulfurtransferase (324 aa).

The tract at residues 1 to 26 (MQDLIDSPTAARTPAEEKIRHEGNKL) is disordered. Basic and acidic residues predominate over residues 14-26 (PAEEKIRHEGNKL). The short motif at 55-60 (SGGKDS) is the PP-loop motif element. The [4Fe-4S] cluster site is built by Cys130, Cys133, and Cys221. The disordered stretch occupies residues 278–310 (RPDANGDTAFDPIDPEDPREDAGDACASSPADG).

Belongs to the TtcA family. As to quaternary structure, homodimer. Mg(2+) serves as cofactor. Requires [4Fe-4S] cluster as cofactor.

Its subcellular location is the cytoplasm. The enzyme catalyses cytidine(32) in tRNA + S-sulfanyl-L-cysteinyl-[cysteine desulfurase] + AH2 + ATP = 2-thiocytidine(32) in tRNA + L-cysteinyl-[cysteine desulfurase] + A + AMP + diphosphate + H(+). The protein operates within tRNA modification. Functionally, catalyzes the ATP-dependent 2-thiolation of cytidine in position 32 of tRNA, to form 2-thiocytidine (s(2)C32). The sulfur atoms are provided by the cysteine/cysteine desulfurase (IscS) system. The sequence is that of tRNA-cytidine(32) 2-sulfurtransferase from Bordetella petrii (strain ATCC BAA-461 / DSM 12804 / CCUG 43448).